The sequence spans 965 residues: Collagenase ColQ1 (965 aa).

Positions 1-30 (MNKKSKINKVMLSISTMALSLGALQAPASA) are cleaved as a signal peptide. A propeptide spanning residues 31–93 (EEKVPYNVLK…KAAVKQVKES (63 aa)) is cleaved from the precursor. The interval 94–366 (YSMADLNKMN…AVEQITTNYN (273 aa)) is activator domain. The segment at 94-765 (YSMADLNKMN…VFHGIAKDDG (672 aa)) is S1 metalloprotease domain. The catalytic subdomain stretch occupies residues 376-645 (DLEKIRKEGK…MQQLIDNQDK (270 aa)). Zn(2+) is bound at residue His-501. Glu-502 is an active-site residue. His-505 and Glu-533 together coordinate Zn(2+). Residues 653–765 (DDYLAEHAPK…VFHGIAKDDG (113 aa)) are helper subdomain. The 82-residue stretch at 769–850 (APTVNINGPY…ESKSETTVTV (82 aa)) folds into the PKD domain. The tract at residues 842–867 (SKSETTVTVKDGSLTESEPNNRPEEA) is disordered. A compositionally biased stretch (polar residues) spans 845–859 (ETTVTVKDGSLTESE). The tract at residues 853–965 (GSLTESEPNN…GDGTYKLSVK (113 aa)) is collagen-binding domain.

This sequence belongs to the peptidase M9B family. Collagenase subfamily. The cofactor is Ca(2+). Zn(2+) is required as a cofactor.

It localises to the secreted. It catalyses the reaction Digestion of native collagen in the triple helical region at Xaa-|-Gly bonds. With synthetic peptides, a preference is shown for Gly at P3 and P1', Pro and Ala at P2 and P2', and hydroxyproline, Ala or Arg at P3'.. Its activity is regulated as follows. Strongly inhibited by EDTA. Not inhibited by E-64 and PMSF, broad-spectrum cysteine and serine protease inhibitors. Its function is as follows. Acts as a true collagenase, which is highly active and cleaves natively folded collagen. In vitro, can also cleave gelatin and the synthetic peptide FALGPA (furylacryloyl-Leu-Gly-Pro-Ala). Causes damage on dermal collagen (COL), resulting in gaps in the tissue, which might lead to an accelerated bacterial infiltration and penetration into deeper sites of the host. This is Collagenase ColQ1 from Bacillus cereus (strain Q1).